The sequence spans 406 residues: Sprouty-related, EVH1 domain-containing protein 1 (406 aa).

The 118-residue stretch at 3-120 (GEQEPDDSYA…RGIRRAIEDL (118 aa)) folds into the WH1 domain. Residues 124–154 (LPASCHGESETSEDGPQVNKEDHYSTHNNDH) are disordered. Over residues 142-154 (NKEDHYSTHNNDH) the composition is skewed to basic and acidic residues. Positions 195 to 247 (PIRHVSFQDEDEIVRINPRDMIIRRYADYRHPDIFRNDVDREEPEDVTFFTKT) constitute a KBD domain. Residues 296-404 (SCVYCQERFN…CGCCGGKHKA (109 aa)) form the SPR domain.

Palmitoylated by ZDHHC17/HIP14. In terms of processing, ubiquitinated. Post-translationally, phosphorylated on tyrosine.

It is found in the cell membrane. Tyrosine kinase substrate that inhibits growth-factor-mediated activation of MAP kinase. The protein is Sprouty-related, EVH1 domain-containing protein 1 (spred1) of Xenopus tropicalis (Western clawed frog).